The following is a 288-amino-acid chain: Pyridoxal kinase PdxY (288 aa).

Residues S12 and 47 to 48 each bind substrate; that span reads TQ. Residues D114, E151, K184, and 211–214 each bind ATP; that span reads RPLL. D225 serves as a coordination point for substrate.

It belongs to the pyridoxine kinase family. PdxY subfamily. In terms of assembly, homodimer. Requires Mg(2+) as cofactor.

It catalyses the reaction pyridoxal + ATP = pyridoxal 5'-phosphate + ADP + H(+). Its pathway is cofactor metabolism; pyridoxal 5'-phosphate salvage; pyridoxal 5'-phosphate from pyridoxal: step 1/1. Pyridoxal kinase involved in the salvage pathway of pyridoxal 5'-phosphate (PLP). Catalyzes the phosphorylation of pyridoxal to PLP. The polypeptide is Pyridoxal kinase PdxY (Pseudomonas syringae pv. tomato (strain ATCC BAA-871 / DC3000)).